We begin with the raw amino-acid sequence, 208 residues long: Protein-L-isoaspartate O-methyltransferase (208 aa).

The active site involves serine 59.

Belongs to the methyltransferase superfamily. L-isoaspartyl/D-aspartyl protein methyltransferase family.

The protein resides in the cytoplasm. The catalysed reaction is [protein]-L-isoaspartate + S-adenosyl-L-methionine = [protein]-L-isoaspartate alpha-methyl ester + S-adenosyl-L-homocysteine. Its function is as follows. Catalyzes the methyl esterification of L-isoaspartyl residues in peptides and proteins that result from spontaneous decomposition of normal L-aspartyl and L-asparaginyl residues. It plays a role in the repair and/or degradation of damaged proteins. The chain is Protein-L-isoaspartate O-methyltransferase from Yersinia pseudotuberculosis serotype O:1b (strain IP 31758).